Consider the following 166-residue polypeptide: Transcription factor HES-5 (166 aa).

In terms of domain architecture, bHLH spans 16 to 72; it reads KNRLRKPVVEKMRRDRINSSIEQLKLLLEQEFARHQPNSKLEKADILEMAVSYLKHS. In terms of domain architecture, Orange spans 88–119; sequence YSEGYSWCLQEAVQFLTLHAASDTQMKLLYHF. Residues 125-144 are disordered; that stretch reads APAAPAKEPKAPGAAPPPAL. Residues 163–166 carry the WRPW motif motif; sequence WRPW.

In terms of assembly, transcription repression requires formation of a complex with a corepressor protein of the Groucho/TLE family. Expressed in fetal heart and brain tumors.

Its subcellular location is the nucleus. In terms of biological role, transcriptional repressor of genes that require a bHLH protein for their transcription. Plays an important role as neurogenesis negative regulator. This chain is Transcription factor HES-5 (HES5), found in Homo sapiens (Human).